The chain runs to 287 residues: Phosphatidylserine decarboxylase proenzyme (287 aa).

Residues Asp90, His147, and Ser252 each act as charge relay system; for autoendoproteolytic cleavage activity in the active site. Ser252 serves as the catalytic Schiff-base intermediate with substrate; via pyruvic acid; for decarboxylase activity. Pyruvic acid (Ser); by autocatalysis is present on Ser252.

Belongs to the phosphatidylserine decarboxylase family. PSD-B subfamily. Prokaryotic type I sub-subfamily. As to quaternary structure, heterodimer of a large membrane-associated beta subunit and a small pyruvoyl-containing alpha subunit. The cofactor is pyruvate. Post-translationally, is synthesized initially as an inactive proenzyme. Formation of the active enzyme involves a self-maturation process in which the active site pyruvoyl group is generated from an internal serine residue via an autocatalytic post-translational modification. Two non-identical subunits are generated from the proenzyme in this reaction, and the pyruvate is formed at the N-terminus of the alpha chain, which is derived from the carboxyl end of the proenzyme. The autoendoproteolytic cleavage occurs by a canonical serine protease mechanism, in which the side chain hydroxyl group of the serine supplies its oxygen atom to form the C-terminus of the beta chain, while the remainder of the serine residue undergoes an oxidative deamination to produce ammonia and the pyruvoyl prosthetic group on the alpha chain. During this reaction, the Ser that is part of the protease active site of the proenzyme becomes the pyruvoyl prosthetic group, which constitutes an essential element of the active site of the mature decarboxylase.

The protein resides in the cell membrane. It catalyses the reaction a 1,2-diacyl-sn-glycero-3-phospho-L-serine + H(+) = a 1,2-diacyl-sn-glycero-3-phosphoethanolamine + CO2. It functions in the pathway phospholipid metabolism; phosphatidylethanolamine biosynthesis; phosphatidylethanolamine from CDP-diacylglycerol: step 2/2. In terms of biological role, catalyzes the formation of phosphatidylethanolamine (PtdEtn) from phosphatidylserine (PtdSer). In Pseudomonas putida (strain GB-1), this protein is Phosphatidylserine decarboxylase proenzyme.